The sequence spans 375 residues: 4-hydroxy-3-methylbut-2-en-1-yl diphosphate synthase (flavodoxin) (375 aa).

Positions 275, 278, 310, and 317 each coordinate [4Fe-4S] cluster.

The protein belongs to the IspG family. [4Fe-4S] cluster is required as a cofactor.

The catalysed reaction is (2E)-4-hydroxy-3-methylbut-2-enyl diphosphate + oxidized [flavodoxin] + H2O + 2 H(+) = 2-C-methyl-D-erythritol 2,4-cyclic diphosphate + reduced [flavodoxin]. It participates in isoprenoid biosynthesis; isopentenyl diphosphate biosynthesis via DXP pathway; isopentenyl diphosphate from 1-deoxy-D-xylulose 5-phosphate: step 5/6. Converts 2C-methyl-D-erythritol 2,4-cyclodiphosphate (ME-2,4cPP) into 1-hydroxy-2-methyl-2-(E)-butenyl 4-diphosphate. In Ruegeria pomeroyi (strain ATCC 700808 / DSM 15171 / DSS-3) (Silicibacter pomeroyi), this protein is 4-hydroxy-3-methylbut-2-en-1-yl diphosphate synthase (flavodoxin).